The chain runs to 313 residues: Cadmium, cobalt and zinc/H(+)-K(+) antiporter (313 aa).

Over 1-14 the chain is Extracellular; sequence MGHNHNHAGGSNKK. The chain crosses the membrane as a helical span at residues 15–35; it reads VLLISFIMITGYMIIEAIGGF. Residues 36 to 45 are Cytoplasmic-facing; the sequence is LTNSLALLSD. The chain crosses the membrane as a helical span at residues 46–66; the sequence is AGHMLSDSISLMVALIAFKLA. Residues 67-80 lie on the Extracellular side of the membrane; sequence EKKASHHKTFGYKR. A helical membrane pass occupies residues 81–101; the sequence is FEILAAVINGVALILISLYII. Residues 102 to 117 are Cytoplasmic-facing; it reads YEAIKRFSHPPEVATT. A helical membrane pass occupies residues 118–138; that stretch reads GMLTISIIGLAVNILVAWIML. The Extracellular segment spans residues 139-159; that stretch reads NGGDTKNNLNIRGAYLHVISD. A helical membrane pass occupies residues 160–180; it reads MLGSIGAILAAILIIFFGWSW. At 181–313 the chain is on the cytoplasmic side; sequence ADPAASVIVA…TENPRDHHHH (133 aa).

It belongs to the cation diffusion facilitator (CDF) transporter (TC 2.A.4) family. SLC30A subfamily.

It localises to the cell membrane. Its function is as follows. Involved in divalent cation and potassium homeostasis in the cell. Catalyzes the active efflux of zinc, cadmium and cobalt, in exchange for potassium and H(+) ions. In Bacillus velezensis (strain DSM 23117 / BGSC 10A6 / LMG 26770 / FZB42) (Bacillus amyloliquefaciens subsp. plantarum), this protein is Cadmium, cobalt and zinc/H(+)-K(+) antiporter (czcD).